Reading from the N-terminus, the 496-residue chain is Glutamyl-tRNA(Gln) amidotransferase subunit A (496 aa).

Catalysis depends on charge relay system residues Lys-75 and Ser-150. Ser-174 serves as the catalytic Acyl-ester intermediate.

This sequence belongs to the amidase family. GatA subfamily. Heterotrimer of A, B and C subunits.

The enzyme catalyses L-glutamyl-tRNA(Gln) + L-glutamine + ATP + H2O = L-glutaminyl-tRNA(Gln) + L-glutamate + ADP + phosphate + H(+). Allows the formation of correctly charged Gln-tRNA(Gln) through the transamidation of misacylated Glu-tRNA(Gln) in organisms which lack glutaminyl-tRNA synthetase. The reaction takes place in the presence of glutamine and ATP through an activated gamma-phospho-Glu-tRNA(Gln). This Burkholderia pseudomallei (strain 668) protein is Glutamyl-tRNA(Gln) amidotransferase subunit A.